We begin with the raw amino-acid sequence, 239 residues long: Small ribosomal subunit protein eS4 (239 aa).

An S4 RNA-binding domain is found at 37 to 99 (IPLAVVIRDY…ADLYFRVIPD (63 aa)).

The protein belongs to the eukaryotic ribosomal protein eS4 family.

This chain is Small ribosomal subunit protein eS4, found in Saccharolobus islandicus (strain Y.N.15.51 / Yellowstone #2) (Sulfolobus islandicus).